A 204-amino-acid chain; its full sequence is CASP-like protein 2U1 (204 aa).

The Cytoplasmic portion of the chain corresponds to 1-36 (MGVLGGDAHVPIGSQVSPGSVVVTNNESFGHRKLLK). Residues 37–57 (GVDFLVRIKAFAFCLAVIVLL) traverse the membrane as a helical segment. The Extracellular segment spans residues 58 to 84 (KNNVQTTVIAPGIVLQAKYNNTKAPVS). N77 carries an N-linked (GlcNAc...) asparagine glycan. A helical membrane pass occupies residues 85–105 (LLVLASICCGYAFLQAVVSLL). The Cytoplasmic portion of the chain corresponds to 106–117 (SFIRDKRVLNNT). A helical membrane pass occupies residues 118–138 (VLAWLTFLLDQVLTYLLLGSA). The Extracellular segment spans residues 139–170 (AATAEAAYIAKRGEDKVQWKAVCGPFKRFCDH). The chain crosses the membrane as a helical span at residues 171-191 (FAATVFLSFIAVIAFAVSAAI). Residues 192 to 204 (SAYYLFRRSKGFK) lie on the Cytoplasmic side of the membrane.

Belongs to the Casparian strip membrane proteins (CASP) family. In terms of assembly, homodimer and heterodimers.

The protein localises to the cell membrane. The protein is CASP-like protein 2U1 of Selaginella moellendorffii (Spikemoss).